The following is a 75-amino-acid chain: Mu-conotoxin GIIIA (75 aa).

Residues 1–20 (MMSKLGVLLTICLLLFPLTA) form the signal peptide. Residues 21 to 51 (LPMDGDEPANRPVERMQDNISSEQYPLFEKR) constitute a propeptide that is removed on maturation. 3 disulfides stabilise this stretch: C54/C66, C55/C71, and C61/C72. Residues P57 and P58 each carry the 4-hydroxyproline; partial modification. A 4-hydroxyproline modification is found at P68. A73 is subject to Alanine amide.

Belongs to the conotoxin M superfamily. In terms of processing, hydroxylated; hydroxylations improve the ability to block Nav1.4/SCN4A sodium channels but does not affect folding. Expressed by the venom duct.

The protein resides in the secreted. Mu-conotoxins block voltage-gated sodium channels (Nav). This toxin potently blocks rat Nav1.4/SCN4A (IC(50)= 19-110 nM). It also moderately blocks rNav1.1/SCN1A (Kd=260 nM), rNav1.2/SCN2A (IC(50)=2.7-17.8 uM), and mNav1.6/SCN8A (IC(50)=680 nM). The inhibition is reversible. In vivo, induces paralysis to an isolated skeletal muscle preparation from frog (cutaneous pectoralis) within a few minutes. In Conus geographus (Geography cone), this protein is Mu-conotoxin GIIIA.